Reading from the N-terminus, the 374-residue chain is Chaperone protein DnaJ (374 aa).

The J domain occupies 5–70 (DFYEILGLGK…QKRDAYDRYG (66 aa)). Residues 28 to 47 (LAMKHHPDRNPDSKGAEDKF) form a disordered region. A compositionally biased stretch (basic and acidic residues) spans 35–47 (DRNPDSKGAEDKF). The CR-type zinc finger occupies 134–212 (GYDTTIRVPS…CSGAGKIKRN (79 aa)). Positions 147, 150, 164, 167, 186, 189, 200, and 203 each coordinate Zn(2+). 4 CXXCXGXG motif repeats span residues 147-154 (CETCDGSG), 164-171 (CTTCGGHG), 186-193 (CPKCHGSG), and 200-207 (CTACSGAG).

Belongs to the DnaJ family. As to quaternary structure, homodimer. It depends on Zn(2+) as a cofactor.

The protein resides in the cytoplasm. In terms of biological role, participates actively in the response to hyperosmotic and heat shock by preventing the aggregation of stress-denatured proteins and by disaggregating proteins, also in an autonomous, DnaK-independent fashion. Unfolded proteins bind initially to DnaJ; upon interaction with the DnaJ-bound protein, DnaK hydrolyzes its bound ATP, resulting in the formation of a stable complex. GrpE releases ADP from DnaK; ATP binding to DnaK triggers the release of the substrate protein, thus completing the reaction cycle. Several rounds of ATP-dependent interactions between DnaJ, DnaK and GrpE are required for fully efficient folding. Also involved, together with DnaK and GrpE, in the DNA replication of plasmids through activation of initiation proteins. The polypeptide is Chaperone protein DnaJ (Herminiimonas arsenicoxydans).